A 476-amino-acid polypeptide reads, in one-letter code: uncharacterized protein (476 aa).

Positions 1 to 24 are cleaved as a signal peptide; the sequence is MIRKSATGVIVALAVIWGGGTWYT.

To E.coli YdgA and H.influenzae HI_1236.

This is an uncharacterized protein from Escherichia coli (strain K12).